The sequence spans 282 residues: tRNA pseudouridine synthase A (282 aa).

Asp-51 acts as the Nucleophile in catalysis. Tyr-109 contacts substrate.

The protein belongs to the tRNA pseudouridine synthase TruA family. Homodimer.

The enzyme catalyses uridine(38/39/40) in tRNA = pseudouridine(38/39/40) in tRNA. Its function is as follows. Formation of pseudouridine at positions 38, 39 and 40 in the anticodon stem and loop of transfer RNAs. The polypeptide is tRNA pseudouridine synthase A (Delftia acidovorans (strain DSM 14801 / SPH-1)).